Consider the following 143-residue polypeptide: Histone H2B.2, sperm (143 aa).

A disordered region spans residues 1-49; sequence MPKSPSKSSPRKGSPRKGSPRKGSPKRGGKGAKRAGKGGRRNVVKRRRR. Short sequence motifs (SPKK motif) lie at residues 4–7, 9–12, 14–17, 19–22, and 24–27; these read SPSK, SPRK, and SPKR. Residues 9–49 are compositionally biased toward basic residues; the sequence is SPRKGSPRKGSPRKGSPKRGGKGAKRAGKGGRRNVVKRRRR. 3 positions are modified to phosphoserine: S14, S19, and S24. Residue S129 is glycosylated (O-linked (GlcNAc) serine). K137 is covalently cross-linked (Glycyl lysine isopeptide (Lys-Gly) (interchain with G-Cter in ubiquitin)).

This sequence belongs to the histone H2B family. The nucleosome is a histone octamer containing two molecules each of H2A, H2B, H3 and H4 assembled in one H3-H4 heterotetramer and two H2A-H2B heterodimers. The octamer wraps approximately 147 bp of DNA. Post-translationally, monoubiquitination of Lys-137 gives a specific tag for epigenetic transcriptional activation and is also prerequisite for histone H3 'Lys-4' and 'Lys-79' methylation. Phosphorylated on SPKK motifs 3, 4 and 5; which may regulate DNA binding. Dephosphorylated during maturation of spermatids to mature sperm and rephosphorylated at fertilization. In terms of processing, glcNAcylation at Ser-129 promotes monoubiquitination of Lys-137. It fluctuates in response to extracellular glucose, and associates with transcribed genes.

It is found in the nucleus. The protein resides in the chromosome. Core component of nucleosome. Nucleosomes wrap and compact DNA into chromatin, limiting DNA accessibility to the cellular machineries which require DNA as a template. Histones thereby play a central role in transcription regulation, DNA repair, DNA replication and chromosomal stability. DNA accessibility is regulated via a complex set of post-translational modifications of histones, also called histone code, and nucleosome remodeling. In Psammechinus miliaris (Green sea urchin), this protein is Histone H2B.2, sperm.